We begin with the raw amino-acid sequence, 1057 residues long: Carbamoyl phosphate synthase large chain (1057 aa).

A carboxyphosphate synthetic domain region spans residues 1–401 (MPKRNDIKTI…SLLKAIRSLE (401 aa)). ATP is bound by residues Arg129, Arg169, Gly175, Gly176, Lys208, Ile210, Glu215, Gly241, Ile242, His243, Gln284, and Glu298. In terms of domain architecture, ATP-grasp 1 spans 133–327 (RTLMNYLNVP…IAKLAAKIAV (195 aa)). The Mg(2+) site is built by Gln284, Glu298, and Asn300. The Mn(2+) site is built by Gln284, Glu298, and Asn300. The oligomerization domain stretch occupies residues 402 to 546 (YGVHHLGLPN…YGTYETENES (145 aa)). The tract at residues 547–929 (IITDKEKILV…ALFKGLTGSG (383 aa)) is carbamoyl phosphate synthetic domain. An ATP-grasp 2 domain is found at 671–861 (EALLRKINVP…MAQLAMRAII (191 aa)). ATP-binding residues include Arg707, Arg746, Leu748, Glu752, Gly777, Val778, His779, Ser780, Gln820, and Glu832. Mg(2+) is bound by residues Gln820, Glu832, and Asn834. Mn(2+)-binding residues include Gln820, Glu832, and Asn834. One can recognise an MGS-like domain in the interval 930–1057 (VEVKDHGTVL…ESMTFTMRQM (128 aa)). Residues 930-1057 (VEVKDHGTVL…ESMTFTMRQM (128 aa)) form an allosteric domain region.

It belongs to the CarB family. Composed of two chains; the small (or glutamine) chain promotes the hydrolysis of glutamine to ammonia, which is used by the large (or ammonia) chain to synthesize carbamoyl phosphate. Tetramer of heterodimers (alpha,beta)4. It depends on Mg(2+) as a cofactor. Mn(2+) is required as a cofactor.

It carries out the reaction hydrogencarbonate + L-glutamine + 2 ATP + H2O = carbamoyl phosphate + L-glutamate + 2 ADP + phosphate + 2 H(+). The enzyme catalyses hydrogencarbonate + NH4(+) + 2 ATP = carbamoyl phosphate + 2 ADP + phosphate + 2 H(+). It functions in the pathway amino-acid biosynthesis; L-arginine biosynthesis; carbamoyl phosphate from bicarbonate: step 1/1. Its pathway is pyrimidine metabolism; UMP biosynthesis via de novo pathway; (S)-dihydroorotate from bicarbonate: step 1/3. Large subunit of the glutamine-dependent carbamoyl phosphate synthetase (CPSase). CPSase catalyzes the formation of carbamoyl phosphate from the ammonia moiety of glutamine, carbonate, and phosphate donated by ATP, constituting the first step of 2 biosynthetic pathways, one leading to arginine and/or urea and the other to pyrimidine nucleotides. The large subunit (synthetase) binds the substrates ammonia (free or transferred from glutamine from the small subunit), hydrogencarbonate and ATP and carries out an ATP-coupled ligase reaction, activating hydrogencarbonate by forming carboxy phosphate which reacts with ammonia to form carbamoyl phosphate. This is Carbamoyl phosphate synthase large chain from Staphylococcus aureus (strain bovine RF122 / ET3-1).